The sequence spans 147 residues: Leghemoglobin (147 aa).

Positions 2 to 147 (GFTADQEALV…LASAIKKAMS (146 aa)) constitute a Globin domain. Nitrated tyrosine is present on residues Tyr25 and Tyr30. Residue Ser45 participates in heme b binding. Ser45 is subject to Phosphoserine. His62 serves as a coordination point for O2. Heme b-binding residues include Lys65, His94, and Lys97. The residue at position 135 (Tyr135) is a Nitrated tyrosine.

This sequence belongs to the plant globin family. In terms of assembly, monomer. In terms of processing, nitrated in effective nodules and particularly in hypoxic conditions; this mechanism may play a protective role in the symbiosis by buffering toxic peroxynitrite NO(2)(-). Nitration level decrease during nodule senescence. Phosphorylation at Ser-45 disrupts the molecular environment of its porphyrin ring oxygen binding pocket, thus leading to a reduced oxygen consumption and to the delivery of oxygen O(2) to symbiosomes. Root nodules.

The protein localises to the cytoplasm. It localises to the cytosol. The protein resides in the nucleus. Leghemoglobin that reversibly binds oxygen O(2) through a pentacoordinated heme iron. In root nodules, facilitates the diffusion of oxygen to the bacteroids while preventing the bacterial nitrogenase from being inactivated by buffering dioxygen, nitric oxide and carbon monoxide, and promoting the formation of reactive oxygen species (ROS, e.g. H(2)O(2)). This role is essential for symbiotic nitrogen fixation (SNF). In Medicago sativa (Alfalfa), this protein is Leghemoglobin (LB3).